Here is a 362-residue protein sequence, read N- to C-terminus: Sterol-4-alpha-carboxylate 3-dehydrogenase, decarboxylating (362 aa).

N-acetylmethionine is present on Met-1. Tyr-161 acts as the Proton acceptor in catalysis. Lys-165 lines the NAD(+) pocket. The helical transmembrane segment at 287-307 threads the bilayer; the sequence is WMAYYLAFLLSLLVMVVSPLI. The Prevents secretion from ER motif lies at 359-362; it reads RKDK.

This sequence belongs to the 3-beta-HSD family. Homodimer.

The protein resides in the endoplasmic reticulum membrane. Its subcellular location is the lipid droplet. The catalysed reaction is a 3beta-hydroxysteroid-4alpha-carboxylate + NADP(+) = a 3-oxosteroid + CO2 + NADPH. It carries out the reaction a 3beta-hydroxysteroid-4alpha-carboxylate + NAD(+) = a 3-oxosteroid + CO2 + NADH. The enzyme catalyses 4alpha-carboxyzymosterol + NADP(+) = zymosterone + CO2 + NADPH. It catalyses the reaction 4alpha-carboxy-4beta-methyl-5alpha-cholest-8-en-3beta-ol + NADP(+) = 4alpha-methyl-5alpha-cholest-8-en-3-one + CO2 + NADPH. The catalysed reaction is 4alpha-carboxy-5alpha-cholest-8-ene-3beta-ol + NADP(+) = 5alpha-cholest-8-en-3-one + CO2 + NADPH. It carries out the reaction 4beta-methylzymosterol-4alpha-carboxylate + NADP(+) = 3-dehydro-4-methylzymosterol + CO2 + NADPH. The enzyme catalyses 4beta-methylzymosterol-4alpha-carboxylate + NAD(+) = 3-dehydro-4-methylzymosterol + CO2 + NADH. It catalyses the reaction 4alpha-carboxy-5alpha-cholest-8-ene-3beta-ol + NAD(+) = 5alpha-cholest-8-en-3-one + CO2 + NADH. The catalysed reaction is 4alpha-carboxy-4beta-methyl-5alpha-cholest-8-en-3beta-ol + NAD(+) = 4alpha-methyl-5alpha-cholest-8-en-3-one + CO2 + NADH. It carries out the reaction 4alpha-carboxyzymosterol + NAD(+) = zymosterone + CO2 + NADH. It functions in the pathway steroid biosynthesis; zymosterol biosynthesis; zymosterol from lanosterol: step 4/6. Catalyzes the NAD(P)(+)-dependent oxidative decarboxylation of the C4 methyl groups of 4-alpha-carboxysterols in post-squalene cholesterol biosynthesis. Plays a role in the regulation of the endocytic trafficking of EGFR. The protein is Sterol-4-alpha-carboxylate 3-dehydrogenase, decarboxylating (Nsdhl) of Mus musculus (Mouse).